The following is a 136-amino-acid chain: uncharacterized protein (136 aa).

A run of 2 helical transmembrane segments spans residues 25 to 47 (ILKASILFLAIASFHLFSIPHAF) and 78 to 97 (ITGAFTLTALWAMAVLLLTA).

The protein resides in the cell membrane. This is an uncharacterized protein from Bacillus subtilis (strain 168).